We begin with the raw amino-acid sequence, 315 residues long: 4-hydroxy-3-methylbut-2-enyl diphosphate reductase (315 aa).

Position 12 (cysteine 12) interacts with [4Fe-4S] cluster. 2 residues coordinate (2E)-4-hydroxy-3-methylbut-2-enyl diphosphate: histidine 41 and histidine 74. Dimethylallyl diphosphate-binding residues include histidine 41 and histidine 74. Isopentenyl diphosphate-binding residues include histidine 41 and histidine 74. Residue cysteine 96 coordinates [4Fe-4S] cluster. Histidine 124 is a binding site for (2E)-4-hydroxy-3-methylbut-2-enyl diphosphate. Position 124 (histidine 124) interacts with dimethylallyl diphosphate. Histidine 124 is a binding site for isopentenyl diphosphate. Residue glutamate 126 is the Proton donor of the active site. Threonine 168 is a (2E)-4-hydroxy-3-methylbut-2-enyl diphosphate binding site. Position 198 (cysteine 198) interacts with [4Fe-4S] cluster. 4 residues coordinate (2E)-4-hydroxy-3-methylbut-2-enyl diphosphate: serine 226, serine 227, asparagine 228, and serine 270. 4 residues coordinate dimethylallyl diphosphate: serine 226, serine 227, asparagine 228, and serine 270. The isopentenyl diphosphate site is built by serine 226, serine 227, asparagine 228, and serine 270.

The protein belongs to the IspH family. Requires [4Fe-4S] cluster as cofactor.

It carries out the reaction isopentenyl diphosphate + 2 oxidized [2Fe-2S]-[ferredoxin] + H2O = (2E)-4-hydroxy-3-methylbut-2-enyl diphosphate + 2 reduced [2Fe-2S]-[ferredoxin] + 2 H(+). The enzyme catalyses dimethylallyl diphosphate + 2 oxidized [2Fe-2S]-[ferredoxin] + H2O = (2E)-4-hydroxy-3-methylbut-2-enyl diphosphate + 2 reduced [2Fe-2S]-[ferredoxin] + 2 H(+). Its pathway is isoprenoid biosynthesis; dimethylallyl diphosphate biosynthesis; dimethylallyl diphosphate from (2E)-4-hydroxy-3-methylbutenyl diphosphate: step 1/1. The protein operates within isoprenoid biosynthesis; isopentenyl diphosphate biosynthesis via DXP pathway; isopentenyl diphosphate from 1-deoxy-D-xylulose 5-phosphate: step 6/6. Functionally, catalyzes the conversion of 1-hydroxy-2-methyl-2-(E)-butenyl 4-diphosphate (HMBPP) into a mixture of isopentenyl diphosphate (IPP) and dimethylallyl diphosphate (DMAPP). Acts in the terminal step of the DOXP/MEP pathway for isoprenoid precursor biosynthesis. The chain is 4-hydroxy-3-methylbut-2-enyl diphosphate reductase from Pseudomonas putida (strain GB-1).